The chain runs to 533 residues: Metal transporter nramp1 homolog (533 aa).

A disordered region spans residues 1 to 33 (MTPRIESEESAPLVNKNNNNNNDNNNNNNVDEE). The Cytoplasmic segment spans residues 1 to 68 (MTPRIESEES…PNIDKPDSKW (68 aa)). The segment covering 14–29 (VNKNNNNNNDNNNNNN) has biased composition (low complexity). A helical membrane pass occupies residues 69 to 89 (INFKTLWAFTGPGFLMSIAYL). Residues 90 to 101 (DPGNLESDIQAG) are Extracellular-facing. Residues 102–122 (AMAGYQLLWVLFWSTVIGFWL) traverse the membrane as a helical segment. The Cytoplasmic portion of the chain corresponds to 123-158 (QMLASRLGVVTGKHLAEHCREQYPKTPRLLLWLMTE). The chain crosses the membrane as a helical span at residues 159–179 (LAIIGSDIQEVIGTAIALQIL). The Extracellular segment spans residues 180 to 182 (SNG). The helical transmembrane segment at 183 to 203 (HIPLWAGVLFTAADTFTFLFL) threads the bilayer. The Cytoplasmic segment spans residues 204 to 212 (EKYGIRKLE). Residues 213–233 (AFFCSLIAIMAISFGVEYIIS) traverse the membrane as a helical segment. At 234–256 (KPDQIEVVKGVFIPLCSQNNISQ) the chain is on the extracellular side. N-linked (GlcNAc...) asparagine glycosylation is present at asparagine 253. Residues 257-277 (AVGILGAVVMPHNIYLHSALV) form a helical membrane-spanning segment. The Cytoplasmic portion of the chain corresponds to 278–302 (QSREIDRKSETQVKIANKYNRLESA). The chain crosses the membrane as a helical span at residues 303 to 323 (FALIISFIINLLLVSVFAKGF). Over 324–348 (YGETTEIGLSSAADFLMDKYGKVAK) the chain is Extracellular. A helical transmembrane segment spans residues 349–368 (YIWAIGLFSAGQCSTMTGTY). The Cytoplasmic segment spans residues 369-387 (SGQFVMEGFLKLKIAPWKR). A helical membrane pass occupies residues 388 to 408 (LLITRCTAIVPAMVVAILSTS). At 409-415 (HLDSLDQ) the chain is on the extracellular side. A helical transmembrane segment spans residues 416-436 (WLNILQSIQLPFAVVPVLLFT). The Cytoplasmic segment spans residues 437-457 (SSEKIMGSKFKNHWLNNQFVR). Residues 458-478 (FLSLLIIAINIYLIITFSMQI) traverse the membrane as a helical segment. Topologically, residues 479–481 (SES) are extracellular. A helical membrane pass occupies residues 482 to 502 (AWMISIVSISFFFYFIFIVYL). Over 503–533 (SMGQENFNSMTKKIKNLFNNNSNQTYNNINY) the chain is Cytoplasmic.

This sequence belongs to the NRAMP family.

Its subcellular location is the membrane. Its function is as follows. Depletes iron from the phagolysosome in an ATP-dependent process. May rather act as a symporter of protons and metal cations in an ATP-dependent process. Nramp1 overexpression protected cells from L.pneumophila infection. The protein is Metal transporter nramp1 homolog (nramp1) of Dictyostelium discoideum (Social amoeba).